Here is a 298-residue protein sequence, read N- to C-terminus: Ethanolamine ammonia-lyase small subunit (298 aa).

Positions 210, 231, and 261 each coordinate adenosylcob(III)alamin.

Belongs to the EutC family. The basic unit is a heterodimer which dimerizes to form tetramers. The heterotetramers trimerize; 6 large subunits form a core ring with 6 small subunits projecting outwards. Requires adenosylcob(III)alamin as cofactor.

The protein localises to the bacterial microcompartment. The enzyme catalyses ethanolamine = acetaldehyde + NH4(+). Its pathway is amine and polyamine degradation; ethanolamine degradation. Its function is as follows. Catalyzes the deamination of various vicinal amino-alcohols to oxo compounds. Allows this organism to utilize ethanolamine as the sole source of nitrogen and carbon in the presence of external vitamin B12. In Salmonella agona (strain SL483), this protein is Ethanolamine ammonia-lyase small subunit.